We begin with the raw amino-acid sequence, 216 residues long: Nucleolar protein 12 (216 aa).

A coiled-coil region spans residues 33 to 97; sequence GFHKRKVERK…LVTAKTESVQ (65 aa). Positions 120-216 are disordered; sequence LLGLPLPEQG…MTGKARHNGE (97 aa). Over residues 129–140 the composition is skewed to acidic residues; that stretch reads GDQDGSQEEEVS. 2 stretches are compositionally biased toward basic residues: residues 171 to 183 and 200 to 216; these read AHSR…KHPR and KTQR…HNGE.

The protein belongs to the RRP17 family. As to quaternary structure, interacts with KIAA1191.

It localises to the nucleus. Its subcellular location is the nucleolus. The protein localises to the cytoplasm. Its function is as follows. Multifunctional RNA binding protein that plays a role in RNA metabolism and DNA maintenance. Participates in the resolution of DNA stress and the maintenance of genome integrity by localizing to sites of DNA insults. Also plays a role in proper nucleolar organization by limiting nucleolar size and regulating nucleolar number. Mechanistically, regulates the nucleolar levels of fibrillarin and nucleolin, two key players in pre-rRNA processing and ribosome assembly. In Rattus norvegicus (Rat), this protein is Nucleolar protein 12 (Nol12).